The following is a 239-amino-acid chain: Probable transcriptional regulatory protein BCQ_0605 (239 aa).

The protein belongs to the TACO1 family. YeeN subfamily.

It localises to the cytoplasm. The protein is Probable transcriptional regulatory protein BCQ_0605 of Bacillus cereus (strain Q1).